A 342-amino-acid chain; its full sequence is Aristolochene synthase (342 aa).

Mg(2+) contacts are provided by D115, N244, S248, and E252. (2E,6E)-farnesyl diphosphate contacts are provided by R340 and Y341.

The protein belongs to the terpene synthase family. As to quaternary structure, homodimer. The cofactor is Mg(2+).

The catalysed reaction is (2E,6E)-farnesyl diphosphate = (+)-aristolochene + diphosphate. Its pathway is sesquiterpene biosynthesis; aristolochene biosynthesis; aristolochene from farnesyl diphosphate: step 1/1. Functionally, aristolochene synthase; part of the gene cluster that mediates the biosynthesis of PR-toxin, a bicyclic sesquiterpene belonging to the eremophilane class and acting as a mycotoxin. The first step of the pathway is catalyzed by the aristolochene synthase which performs the cyclization of trans,trans-farnesyl diphosphate (FPP) to the bicyclic sesquiterpene aristolochene. Following the formation of aristolochene, the non-oxygenated aristolochene is converted to the trioxygenated intermediate eremofortin B, via 7-epi-neopetasone. This conversion appears to involve three enzymes, a hydroxysterol oxidase-like enzyme, the quinone-oxidase prx3 that forms the quinone-type-structure in the bicyclic nucleus of aristolochene with the C8-oxo group and the C-3 hydroxyl group, and the P450 monooxygenase ORF6 that introduces the epoxide at the double bond between carbons 1 and 2. No monoxy or dioxy-intermediates have been reported to be released to the broth, so these three early oxidative reactions may be coupled together. Eremofortin B is further oxidized by another P450 monooxygenase, that introduces a second epoxide between carbons 7 and 11 prior to acetylation to eremofortin A by the acetyltransferase ORF8. The second epoxidation may be performed by a second P450 monooxygenase. After the acetylation step, eremofortin A is converted to eremofortin C and then to PR-toxin. First the conversion of eremofortin A to eremofortin C proceeds by oxidation of the side chain of the molecule at C-12 and is catalyzed by the short-chain oxidoreductase prx1. The cytochrome P450 monooxygenase ORF5 also plays a role in this step. The primary alcohol formed at C-12 is finally oxidized by the short-chain alcohol dehydrogenase prx4 that forms PR-toxin. This chain is Aristolochene synthase, found in Penicillium roqueforti (strain FM164).